We begin with the raw amino-acid sequence, 635 residues long: DNA mismatch repair protein MutL (635 aa).

Positions 359–399 (GTNKYAQPEAAKSSAAEQAVARERSSARERAAPAYKEDHPY) are disordered. Residues 364–377 (AQPEAAKSSAAEQA) show a composition bias toward low complexity. Basic and acidic residues predominate over residues 378-399 (VARERSSARERAAPAYKEDHPY).

It belongs to the DNA mismatch repair MutL/HexB family.

Functionally, this protein is involved in the repair of mismatches in DNA. It is required for dam-dependent methyl-directed DNA mismatch repair. May act as a 'molecular matchmaker', a protein that promotes the formation of a stable complex between two or more DNA-binding proteins in an ATP-dependent manner without itself being part of a final effector complex. The polypeptide is DNA mismatch repair protein MutL (Yersinia pseudotuberculosis serotype O:1b (strain IP 31758)).